A 398-amino-acid polypeptide reads, in one-letter code: ATP-dependent RNA helicase eIF4A (398 aa).

The Q motif motif lies at 25–53 (DSFDSMELKPELLRGVYAYGFERPSAIQQ). The 171-residue stretch at 56–226 (ILPIVKGNDV…TKFMRDPVRI (171 aa)) folds into the Helicase ATP-binding domain. 69 to 76 (AQSGTGKT) lines the ATP pocket. The DEAD box motif lies at 174-177 (DEAD). The region spanning 237–398 (GIKQFYIAVE…EMPMNVADLI (162 aa)) is the Helicase C-terminal domain.

Belongs to the DEAD box helicase family. eIF4A subfamily. As to quaternary structure, component of the eIF4F complex, which composition varies with external and internal environmental conditions. It is composed of at least eIF4A, eIF4E and eIF4G.

The protein resides in the cytoplasm. The enzyme catalyses ATP + H2O = ADP + phosphate + H(+). ATP-dependent RNA helicase which is a subunit of the eIF4F complex involved in cap recognition and is required for mRNA binding to ribosome. In the current model of translation initiation, eIF4A unwinds RNA secondary structures in the 5'-UTR of mRNAs which is necessary to allow efficient binding of the small ribosomal subunit, and subsequent scanning for the initiator codon. The polypeptide is ATP-dependent RNA helicase eIF4A (tif1) (Emericella nidulans (strain FGSC A4 / ATCC 38163 / CBS 112.46 / NRRL 194 / M139) (Aspergillus nidulans)).